The chain runs to 1710 residues: Centrosomal protein of 152 kDa (1710 aa).

Disordered stretches follow at residues 1 to 27 (MSLDFGSVALPVQNEDEEYDEEDYERE), 39 to 79 (HDML…NEQM), and 108 to 139 (NRSKTEDRHPVYHPEEGGDEGGSGYSPPSKCE). The tract at residues 1–60 (MSLDFGSVALPVQNEDEEYDEEDYEREKELQQLLTDLPHDMLDDDLSSPELQYSDCSEDG) is interaction with PLK4. A compositionally biased stretch (acidic residues) spans 14 to 24 (NEDEEYDEEDY). The span at 108–123 (NRSKTEDRHPVYHPEE) shows a compositional bias: basic and acidic residues. Residues 234 to 490 (ENMQIIQLQV…ISLYESAAKL (257 aa)) adopt a coiled-coil conformation. Positions 587 to 604 (DEKSIEVETKTDTSEKPK) are enriched in basic and acidic residues. A disordered region spans residues 587–611 (DEKSIEVETKTDTSEKPKNQLWPES). Coiled coils occupy residues 615–664 (DVVR…QDFD), 700–772 (EKQQ…LEKE), and 902–993 (AVSE…INEV). The segment at 1120 to 1142 (ELSKDSASQGTGQGDPGPAAGHH) is disordered. A coiled-coil region spans residues 1170 to 1241 (HCFQELEKAK…LEELQTLCKT (72 aa)). Thr1241 carries the post-translational modification Phosphothreonine.

The protein belongs to the CEP152 family. In terms of assembly, interacts (via N-terminus) with PLK4; the interaction is mutally exclusive with a PLK4:CEP192 interaction. Interacts (via C-terminus) with CPAP (via-N-terminus). Interacts with CINP. Interacts with CDK5RAP2, WDR62, CEP63 and CEP131. CEP63, CDK5RAP2, CEP152, WDR62 are proposed to form a stepwise assembled complex at the centrosome forming a ring near parental centrioles. Interacts with DEUP1; this interaction recruits CEP152 to the deuterosome. The interactions with CEP63 and DEUP1 are mutually exclusive. Interacts with CCDC66.

It is found in the cytoplasm. It localises to the cytoskeleton. Its subcellular location is the microtubule organizing center. The protein resides in the centrosome. The protein localises to the centriole. Functionally, necessary for centrosome duplication; the function also seems to involve CEP63, CDK5RAP2 and WDR62 through a stepwise assembled complex at the centrosome that recruits CDK2 required for centriole duplication. Acts as a molecular scaffold facilitating the interaction of PLK4 and CPAP, 2 molecules involved in centriole formation. Proposed to snatch PLK4 away from PLK4:CEP92 complexes in early G1 daughter centriole and to reposition PLK4 at the outer boundary of a newly forming CEP152 ring structure. Also plays a key role in deuterosome-mediated centriole amplification in multiciliated that can generate more than 100 centrioles. Overexpression of CEP152 can drive amplification of centrioles. This is Centrosomal protein of 152 kDa from Homo sapiens (Human).